A 23-amino-acid polypeptide reads, in one-letter code: NADH-ubiquinone oxidoreductase 29 kDa subunit (23 aa).

Complex I is composed of about 45 different subunits.

It is found in the mitochondrion inner membrane. It carries out the reaction a ubiquinone + NADH + 5 H(+)(in) = a ubiquinol + NAD(+) + 4 H(+)(out). Functionally, transfer of electrons from NADH to the respiratory chain. The immediate electron acceptor for the enzyme is believed to be ubiquinone. The protein is NADH-ubiquinone oxidoreductase 29 kDa subunit of Solanum tuberosum (Potato).